The chain runs to 840 residues: Protein translocase subunit SecA (840 aa).

Residues Gln-85, Gly-103 to Thr-107, and Asp-492 contribute to the ATP site. Positions Gln-787–Asp-821 are disordered. Residues Asp-802 to Arg-819 show a composition bias toward basic and acidic residues. Positions 823, 825, 834, and 835 each coordinate Zn(2+).

This sequence belongs to the SecA family. Monomer and homodimer. Part of the essential Sec protein translocation apparatus which comprises SecA, SecYEG and auxiliary proteins SecDF. Other proteins may also be involved. Zn(2+) serves as cofactor.

It localises to the cell membrane. Its subcellular location is the cytoplasm. It catalyses the reaction ATP + H2O + cellular proteinSide 1 = ADP + phosphate + cellular proteinSide 2.. In terms of biological role, part of the Sec protein translocase complex. Interacts with the SecYEG preprotein conducting channel. Has a central role in coupling the hydrolysis of ATP to the transfer of proteins into and across the cell membrane, serving as an ATP-driven molecular motor driving the stepwise translocation of polypeptide chains across the membrane. This Clostridium perfringens (strain SM101 / Type A) protein is Protein translocase subunit SecA.